Reading from the N-terminus, the 312-residue chain is ADIPOR-like receptor IZH4 (312 aa).

Residues 1 to 38 (MVSLTTIEQSPVKCETTTEKESNDTRGTDSNENAETKE) are disordered. Topologically, residues 1 to 64 (MVSLTTIEQS…YKNKSSRNES (64 aa)) are cytoplasmic. Positions 16–38 (TTTEKESNDTRGTDSNENAETKE) are enriched in basic and acidic residues. Residues 65 to 85 (LVALIYLLGSMLSFCLLIFFT) form a helical membrane-spanning segment. The Lumenal segment spans residues 86–101 (DFYLIPLFPTTTTMTD). Residues 102 to 122 (YIVFNFYLLNVFVFCMVHFIY) traverse the membrane as a helical segment. Residues 123–141 (HFVKNISLQQHLEHWQKFS) are Cytoplasmic-facing. The helical transmembrane segment at 142-162 (YLSNINLLISSQITILYYLFY) threads the bilayer. Topologically, residues 163 to 165 (DYV) are lumenal. The helical transmembrane segment at 166–186 (FFFKIFTLLMNFIGLVAYFFI) threads the bilayer. Residues 187–201 (LTDKLISSKRFNKTV) are Cytoplasmic-facing. The helical transmembrane segment at 202 to 222 (FFISVSVVCCSLPLLTAIITF) threads the bilayer. The Lumenal portion of the chain corresponds to 223-231 (DGLENLKER). Residues 232-252 (IKVNAITWELVALVAASIIYV) traverse the membrane as a helical segment. Residues 253–277 (TRFPESLFRRNKKEEGWNHSEYLFH) lie on the Cytoplasmic side of the membrane. Residues 278–298 (LLISGTAFYHFFILIQSYILM) form a helical membrane-spanning segment. The Lumenal segment spans residues 299–312 (HSSLNQPELINFKS).

This sequence belongs to the ADIPOR family.

The protein localises to the endoplasmic reticulum membrane. ADIPOR-like receptor involved in zinc metabolism either by altering membrane sterol content or by directly altering cellular zinc levels. The chain is ADIPOR-like receptor IZH4 (IZH4) from Saccharomyces cerevisiae (strain ATCC 204508 / S288c) (Baker's yeast).